The following is a 1360-amino-acid chain: DNA-directed RNA polymerase subunit beta (1360 aa).

Belongs to the RNA polymerase beta chain family. In terms of assembly, the RNAP catalytic core consists of 2 alpha, 1 beta, 1 beta' and 1 omega subunit. When a sigma factor is associated with the core the holoenzyme is formed, which can initiate transcription.

It catalyses the reaction RNA(n) + a ribonucleoside 5'-triphosphate = RNA(n+1) + diphosphate. Its function is as follows. DNA-dependent RNA polymerase catalyzes the transcription of DNA into RNA using the four ribonucleoside triphosphates as substrates. This chain is DNA-directed RNA polymerase subunit beta, found in Teredinibacter turnerae (strain ATCC 39867 / T7901).